Here is a 106-residue protein sequence, read N- to C-terminus: MDQFKHIDVKGAQALIEQNEARLVDIRDPQSFAVAHSETAYHLTNDTMVSFMDEVEFEQPILVMCYHGISSQGAAQYLVNQGFEEVYSVDGGFEASYRAELPVIAG.

The 89-residue stretch at 17–105 folds into the Rhodanese domain; it reads EQNEARLVDI…SYRAELPVIA (89 aa). Cys65 (cysteine persulfide intermediate) is an active-site residue.

The protein belongs to the GlpE family.

It is found in the cytoplasm. It catalyses the reaction thiosulfate + hydrogen cyanide = thiocyanate + sulfite + 2 H(+). The catalysed reaction is thiosulfate + [thioredoxin]-dithiol = [thioredoxin]-disulfide + hydrogen sulfide + sulfite + 2 H(+). Functionally, transferase that catalyzes the transfer of sulfur from thiosulfate to thiophilic acceptors such as cyanide or dithiols. May function in a CysM-independent thiosulfate assimilation pathway by catalyzing the conversion of thiosulfate to sulfite, which can then be used for L-cysteine biosynthesis. The protein is Thiosulfate sulfurtransferase GlpE of Vibrio atlanticus (strain LGP32) (Vibrio splendidus (strain Mel32)).